Here is a 179-residue protein sequence, read N- to C-terminus: Crossover junction endodeoxyribonuclease RuvC (179 aa).

Catalysis depends on residues Asp7 and Glu67. Residues Asp7 and Glu67 each contribute to the Mn(2+) site. Positions 68–74 match the DNA-binding loop motif; the sequence is DQILRRQ. Residues His139 and Asp142 contribute to the active site. His139 contributes to the Mn(2+) binding site.

This sequence belongs to the RuvC family. In terms of assembly, homodimer which binds Holliday junction (HJ) DNA. The HJ becomes 2-fold symmetrical on binding to RuvC with unstacked arms; it has a different conformation from HJ DNA in complex with RuvA. In the full resolvosome a probable DNA-RuvA(4)-RuvB(12)-RuvC(2) complex forms which resolves the HJ. Mn(2+) is required as a cofactor.

It localises to the cytoplasm. It catalyses the reaction Endonucleolytic cleavage at a junction such as a reciprocal single-stranded crossover between two homologous DNA duplexes (Holliday junction).. Its function is as follows. The RuvA-RuvB-RuvC complex processes Holliday junction (HJ) DNA during genetic recombination and DNA repair. Endonuclease that resolves HJ intermediates. Cleaves cruciform DNA by making single-stranded nicks across the HJ at symmetrical positions within the homologous arms, probably yielding a 5'-phosphate and a 3'-hydroxyl group; requires a central core of homology in the junction. The consensus cleavage sequence is 5'-(G/C)TC(C/G)-3' (a different site than E.coli); cleavage occurs on the 3'-side of the TC dinucleotide at the point of strand exchange. Also resolves nicked HJ intermediates, replication forks and Y-junction DNA in vitro. HJ branch migration catalyzed by RuvA-RuvB allows RuvC to scan DNA until it finds its consensus sequence, where it cleaves and resolves the cruciform DNA. Functionally, binds HJ DNA independently of homologous core or consensus sequence; Mn(2+) is not essential for binding but improves it, while &gt;1.0 mM Mg(2+) inhibit binding. Also binds Y-junction DNA less well. Requires a homologous core to cleave DNA. Another study shows divalent cations (Mn(2+), Mg(2+) and Ca(2+), tested up to 5.0 mM) improve DNA binding considerably over binding in their absence. This is Crossover junction endodeoxyribonuclease RuvC from Deinococcus radiodurans (strain ATCC 13939 / DSM 20539 / JCM 16871 / CCUG 27074 / LMG 4051 / NBRC 15346 / NCIMB 9279 / VKM B-1422 / R1).